The primary structure comprises 434 residues: Glutamyl-tRNA reductase (434 aa).

Substrate contacts are provided by residues 49-52, Ser-109, 114-116, and Gln-120; these read TCNR and EPQ. Residue Cys-50 is the Nucleophile of the active site. 189 to 194 is an NADP(+) binding site; that stretch reads GAGEMC.

This sequence belongs to the glutamyl-tRNA reductase family. In terms of assembly, homodimer.

The enzyme catalyses (S)-4-amino-5-oxopentanoate + tRNA(Glu) + NADP(+) = L-glutamyl-tRNA(Glu) + NADPH + H(+). It functions in the pathway porphyrin-containing compound metabolism; protoporphyrin-IX biosynthesis; 5-aminolevulinate from L-glutamyl-tRNA(Glu): step 1/2. Its function is as follows. Catalyzes the NADPH-dependent reduction of glutamyl-tRNA(Glu) to glutamate 1-semialdehyde (GSA). The sequence is that of Glutamyl-tRNA reductase from Geobacter metallireducens (strain ATCC 53774 / DSM 7210 / GS-15).